The sequence spans 329 residues: Phosphate acetyltransferase (329 aa).

The protein belongs to the phosphate acetyltransferase and butyryltransferase family.

Its subcellular location is the cytoplasm. The catalysed reaction is acetyl-CoA + phosphate = acetyl phosphate + CoA. The protein operates within metabolic intermediate biosynthesis; acetyl-CoA biosynthesis; acetyl-CoA from acetate: step 2/2. The sequence is that of Phosphate acetyltransferase (pta) from Staphylococcus epidermidis (strain ATCC 12228 / FDA PCI 1200).